A 448-amino-acid polypeptide reads, in one-letter code: N-succinylarginine dihydrolase (448 aa).

Substrate is bound by residues 19-28, N110, and 137-138; these read AGLSYGNVAS and HR. E174 is an active-site residue. R214 provides a ligand contact to substrate. H250 is a catalytic residue. Substrate contacts are provided by D252 and N364. C370 (nucleophile) is an active-site residue.

This sequence belongs to the succinylarginine dihydrolase family. As to quaternary structure, homodimer.

The catalysed reaction is N(2)-succinyl-L-arginine + 2 H2O + 2 H(+) = N(2)-succinyl-L-ornithine + 2 NH4(+) + CO2. It participates in amino-acid degradation; L-arginine degradation via AST pathway; L-glutamate and succinate from L-arginine: step 2/5. Functionally, catalyzes the hydrolysis of N(2)-succinylarginine into N(2)-succinylornithine, ammonia and CO(2). This is N-succinylarginine dihydrolase from Pseudoalteromonas translucida (strain TAC 125).